A 201-amino-acid polypeptide reads, in one-letter code: Holliday junction branch migration complex subunit RuvA (201 aa).

The segment at 1–64 is domain I; that stretch reads MIGRLRGTLA…EDAHLLYGFA (64 aa). The segment at 65–143 is domain II; the sequence is EKRERELFRE…AWENMPTIAP (79 aa). Residues 144-152 form a flexible linker region; that stretch reads LVMEPRASA. Residues 153 to 201 form a domain III region; that stretch reads TVSSAEADAVSALIALGFKPQEASRAVAAVPGEDLSSEEMIRQALKGMV.

The protein belongs to the RuvA family. In terms of assembly, homotetramer. Forms an RuvA(8)-RuvB(12)-Holliday junction (HJ) complex. HJ DNA is sandwiched between 2 RuvA tetramers; dsDNA enters through RuvA and exits via RuvB. An RuvB hexamer assembles on each DNA strand where it exits the tetramer. Each RuvB hexamer is contacted by two RuvA subunits (via domain III) on 2 adjacent RuvB subunits; this complex drives branch migration. In the full resolvosome a probable DNA-RuvA(4)-RuvB(12)-RuvC(2) complex forms which resolves the HJ.

The protein localises to the cytoplasm. Its function is as follows. The RuvA-RuvB-RuvC complex processes Holliday junction (HJ) DNA during genetic recombination and DNA repair, while the RuvA-RuvB complex plays an important role in the rescue of blocked DNA replication forks via replication fork reversal (RFR). RuvA specifically binds to HJ cruciform DNA, conferring on it an open structure. The RuvB hexamer acts as an ATP-dependent pump, pulling dsDNA into and through the RuvAB complex. HJ branch migration allows RuvC to scan DNA until it finds its consensus sequence, where it cleaves and resolves the cruciform DNA. This is Holliday junction branch migration complex subunit RuvA from Pseudomonas aeruginosa (strain LESB58).